Consider the following 397-residue polypeptide: Elongation factor Tu (397 aa).

The tr-type G domain occupies 10–206 (KPHVNIGTIG…AVDTYIPTPE (197 aa)). A G1 region spans residues 19-26 (GHVDHGKT). 19–26 (GHVDHGKT) contributes to the GTP binding site. Residue Thr-26 coordinates Mg(2+). The interval 60 to 64 (GITIN) is G2. The interval 81-84 (DCPG) is G3. GTP-binding positions include 81–85 (DCPGH) and 136–139 (NKSD). Residues 136–139 (NKSD) form a G4 region. Positions 174–176 (SAL) are G5.

This sequence belongs to the TRAFAC class translation factor GTPase superfamily. Classic translation factor GTPase family. EF-Tu/EF-1A subfamily. Monomer.

It localises to the cytoplasm. It catalyses the reaction GTP + H2O = GDP + phosphate + H(+). Its function is as follows. GTP hydrolase that promotes the GTP-dependent binding of aminoacyl-tRNA to the A-site of ribosomes during protein biosynthesis. The polypeptide is Elongation factor Tu (Clostridium kluyveri (strain ATCC 8527 / DSM 555 / NBRC 12016 / NCIMB 10680 / K1)).